The following is a 304-amino-acid chain: Urease accessory protein UreD 2 (304 aa).

The protein belongs to the UreD family. In terms of assembly, ureD, UreF and UreG form a complex that acts as a GTP-hydrolysis-dependent molecular chaperone, activating the urease apoprotein by helping to assemble the nickel containing metallocenter of UreC. The UreE protein probably delivers the nickel.

It localises to the cytoplasm. Required for maturation of urease via the functional incorporation of the urease nickel metallocenter. Functionally, disrupting the ure2 operon has no effect on urease activity or pathogen survival in BALB/c mice when administered orally. This is Urease accessory protein UreD 2 from Brucella abortus (strain 2308).